Consider the following 125-residue polypeptide: Aldolase FrzH (125 aa).

It catalyses the reaction (2S)-3-(4-methoxyphenyl)-2-[(3S)-3-(methylamino)-8-oxo-1-azaspiro[4.5]decan-1-yl]propanal = (1S,3S,6S,7S,8R)-7-hydroxy-6-[(4-methoxyphenyl)methyl]-3-(methylamino)-5-azatricyclo[6.3.1.0(1,5)]dodecan-9-one. The protein operates within secondary metabolite biosynthesis. Functionally, aldolase; part of the gene cluster that mediates the biosynthesis of the alkaloid (-)-FR901483, a potent immunosuppressant that shows efficacy in animal models and a probable inhibitor of purine nucleotide biosynthesis by targeting phosphoribosylpyrophosphate amidotransferase (PPAT). Within the pathway, FrzH is a new kind of aldolase with no similarities to known aldolases, and which catalyzes the intramolecular aldol condensation via formation of a C9-C3' bond to yield an aza-tricyclic product. The biosynthesis of (-)-FR901483 starts with the condensation of two L-tyrosines to yield (S,S)-dityrosyl-piperazine. This process occurs in 3 steps with the non-canonical nonribosomal peptide synthetase FrzA catalyzing the reduction of L-tyrosine into L-tyrosinal, the spontaneous condensation of 2 L-tyrosinal units, and the subsequent reduction by the NmrA-like family domain-containing oxidoreductase FrzB. The cytochrome P450 monooxygenase FrzC then performs coupling between N10 and C1' to morph the piperazine into a 1,4-diazabicyclo[3.2.1]octane spiro-fused to a 2,5-cyclohexadienone. The dienone portion is further reduced to cyclohexanone by the flavin-dependent reductase FrzD. The methyltranserases (MTs) FrzE and FrzF are then involved in the methylation at the C10' amine and the C4 phenolic oxygen, respectively. The order of the two MTs appear to be interchangeable. Cleavage of the C9-N10' bond by the dioxygenase FrzG then leads to formation of a conjugated iminium. In addition to the oxidation of C9, an additional dehydrogenation between C7 and C8 can occur to give a likely shunt product. The next biosynthetic step is the intramolecular aldol condensation catalyzed by the newly identified aldolase FrzH to yield an aza-tricyclic product with the formation of a C9-C3' bond. The short-chain dehydrogenase/reductase FrzI then produces dephospho-(-)-FR901483 that is phosphorylated at C4'-OH into (-)-FR901483 by the phosphotransferase FrzJ. The sequence is that of Aldolase FrzH from Cladobotryum sp.